The sequence spans 355 residues: Nematocyst expressed protein 3 (355 aa).

Positions 1–18 (MKLTYILLIAVVGVAIEA) are cleaved as a signal peptide. 3 ShKT domains span residues 50–89 (CKDVADDCKAFGKLEKDDENSCFNNPDKARNECPVSCKLC), 107–134 (QPQQCSQQSCYETPQWSVQNCAVTCQLC), and 140–182 (SGPV…CNTY). Intrachain disulfides connect Cys50–Cys89, Cys57–Cys82, Cys71–Cys86, Cys116–Cys131, Cys149–Cys175, and Cys158–Cys179. Positions 92–355 (KRSKKQSDYM…KKSKSHKKQH (264 aa)) are excised as a propeptide. Residues 202–355 (YQPNAMPTPP…KKSKSHKKQH (154 aa)) are disordered. Residues 207–221 (MPTPPQGVTPAPLPP) are compositionally biased toward pro residues. 3 stretches are compositionally biased toward low complexity: residues 222–232 (YFQQQGYGYPQ), 240–270 (VQPGQTQAPTAAQSTPAPVQTTPASGKTTTE), and 277–332 (TEAA…AQSD). A compositionally biased stretch (basic residues) spans 335 to 355 (NKKKHKKDKAQKKSKSHKKQH).

Belongs to the NEP3 family. In terms of tissue distribution, nematocytes. In late planulae, transcripts are found throughout the ectoderm in nematocytes, with high concentration of expressing cells in the oral pole. In primary polyps, is expressed in nematocytes in the body wall and physa ectoderm and in the upper and lower pharynx.

The protein resides in the nematocyst. It is found in the secreted. Functionally, neurotoxin. In vivo, induces pronounced contraction and tail twitching on zebrafish larvae, as well as death 5 hours later. The chain is Nematocyst expressed protein 3 from Nematostella vectensis (Starlet sea anemone).